The primary structure comprises 148 residues: uncharacterized protein (148 aa).

A helical membrane pass occupies residues 1 to 21; that stretch reads MLQNYAIVLGMAVAVAIWYFF. Residues 27-61 are disordered; that stretch reads APPGPNPPKPDPPKPDPPKMHMPKKKPHWMDPHLT.

The protein resides in the host membrane. This is an uncharacterized protein from Frog virus 3 (isolate Goorha) (FV-3).